A 633-amino-acid chain; its full sequence is Endosomal/prevacuolar sodium/hydrogen exchanger (633 aa).

The N-terminal stretch at 1–21 (MLSKVLLNIAFKVLLTTAKRA) is a signal peptide. Residues 22–61 (VDPDDDDELLPSPDLPGSDDPIAGDPDVDLNPVTEEMFSS) are Lumenal-facing. The interval 25–44 (DDDDELLPSPDLPGSDDPIA) is disordered. Over residues 31–42 (LPSPDLPGSDDP) the composition is skewed to low complexity. Residues 62 to 82 (WALFIMLLLLISALWSSYYLT) form a helical membrane-spanning segment. The Cytoplasmic segment spans residues 83 to 85 (QKR). The helical transmembrane segment at 86 to 106 (IRAVHETVLSIFYGMVIGLII) threads the bilayer. The Lumenal portion of the chain corresponds to 107 to 117 (RMSPGHYIQDT). A helical membrane pass occupies residues 118–138 (VTFNSSYFFNVLLPPIILNSG). An Amiloride-binding motif is present at residues 124 to 133 (YFFNVLLPPI). Residues 139–152 (YELNQVNFFNNMLS) lie on the Cytoplasmic side of the membrane. The helical transmembrane segment at 153–173 (ILIFAIPGTFISAVVIGIILY) threads the bilayer. Residues 174 to 189 (IWTFLGLESIDISFAD) are Lumenal-facing. A helical membrane pass occupies residues 190 to 211 (AMSVGATLSATDPVTILSIFNA). The Cytoplasmic portion of the chain corresponds to 212 to 217 (YKVDPK). The chain crosses the membrane as a helical span at residues 218–238 (LYTIIFGESLLNDAISIVMFE). Over 239-258 (TCQKFHGQPATFSSVFEGAG) the chain is Lumenal. Residues 259–279 (LFLMTFSVSLLIGVLIGILVA) traverse the membrane as a helical segment. Topologically, residues 280–288 (LLLKHTHIR) are cytoplasmic. The helical transmembrane segment at 289–308 (RYPQIESCLILLIAYESYFF) threads the bilayer. At 309–313 (SNGCH) the chain is on the lumenal side. The helical transmembrane segment at 314–333 (MSGIVSLLFCGITLKHYAYY) threads the bilayer. The Cytoplasmic portion of the chain corresponds to 334 to 344 (NMSRRSQITIK). Residues 345 to 364 (YIFQLLARLSENFIFIYLGL) form a helical membrane-spanning segment. At 365–376 (ELFTEVELVYKP) the chain is on the cytoplasmic side. Residues 377–397 (LLIIVAAISICVARWCAVFPL) traverse the membrane as a helical segment. Topologically, residues 398-431 (SQFVNWIYRVKTIRSMSGITGENISVPDEIPYNY) are lumenal. A glycan (N-linked (GlcNAc...) asparagine) is linked at Asn-420. A helical membrane pass occupies residues 432-452 (QMMTFWAGLRGAVGVALALGI). The Cytoplasmic portion of the chain corresponds to 453–457 (QGEYK). The helical transmembrane segment at 458–478 (FTLLATVLVVVVLTVIIFGGT) threads the bilayer. Thr-490 is modified (phosphothreonine). Position 494 is a phosphoserine (Ser-494). Thr-498 is subject to Phosphothreonine. Ser-499 is modified (phosphoserine). Residues Asn-515, Asn-550, and Asn-563 are each glycosylated (N-linked (GlcNAc...) asparagine). The disordered stretch occupies residues 553–578 (TTGGNTFGGLNETENTSPNPARSSMD). Polar residues predominate over residues 564–574 (ETENTSPNPAR). Phosphoserine is present on Ser-569.

It belongs to the monovalent cation:proton antiporter 1 (CPA1) transporter (TC 2.A.36) family. Interacts with CYP6.

It localises to the endosome membrane. It is found in the prevacuolar compartment membrane. In terms of biological role, endosomal/prevacuolar electroneutral Na(+)/H(+) exchanger which mediates intracellular sequestration of Na(+) cations, regulates vacuolar pH and contributes to osmotolerance following sudden exposure to hyperosmotic media. Also contributes to the postdiauxic/stationary phase resistance to osmotic stress and allows for the continued growth of cells until the acquired osmotolerance response can occur. Involved in hygromycin resistance probably through its influence on the electrochemical proton gradient affecting secondarily the entrance of hygromycin. Mediates pH-dependent vesicle trafficking out of the endosome. Contributes to K(+) sequestration and homeostasis. The sequence is that of Endosomal/prevacuolar sodium/hydrogen exchanger (NHX1) from Saccharomyces cerevisiae (strain ATCC 204508 / S288c) (Baker's yeast).